The sequence spans 127 residues: Small ribosomal subunit protein uS12m (127 aa).

Belongs to the universal ribosomal protein uS12 family.

Its subcellular location is the mitochondrion. Protein S12 is involved in the translation initiation step. This is Small ribosomal subunit protein uS12m (RPS12) from Chondrus crispus (Carrageen Irish moss).